We begin with the raw amino-acid sequence, 103 residues long: Putative protein YmfH (103 aa).

The tract at residues 1-34 (MVNAAQRTRVKVEADNRPSVDTHPPGVQPSPGTG) is disordered. Residues 10–20 (VKVEADNRPSV) are compositionally biased toward basic and acidic residues. The next 2 helical transmembrane spans lie at 42 to 62 (MLCV…TALF) and 73 to 93 (GLIT…CFVE).

The protein localises to the cell inner membrane. This Escherichia coli (strain K12) protein is Putative protein YmfH (ymfH).